Reading from the N-terminus, the 798-residue chain is Acetamidase regulatory protein (798 aa).

Residues 20 to 50 constitute a DNA-binding region (zn(2)-C6 fungal-type); sequence CVHCHRRKVRCDARLVGLPCSNCRSAGKTDC. Disordered stretches follow at residues 68–96, 115–172, and 632–714; these read VPIR…PPNA, ANRV…ESRA, and LRTT…TLSA. Composition is skewed to low complexity over residues 82–94 and 133–147; these read KPIS…SEPP and TRSN…QYQN. The segment covering 632–641 has biased composition (basic and acidic residues); that stretch reads LRTTTSDRPR. Residues 644–663 are compositionally biased toward polar residues; it reads SNLSNNSTNSPASQQKNTSG. A compositionally biased stretch (pro residues) spans 678–687; it reads PSAPSIPPLQ.

The protein localises to the nucleus. Positively regulates the expression of 5 genes involved in the catabolism of certain amides (amdS), omega amino acids (gatA and gabA), and lactams (lamA and lamB) in the presence of omega amino acid inducers. The chain is Acetamidase regulatory protein (amdR) from Emericella nidulans (strain FGSC A4 / ATCC 38163 / CBS 112.46 / NRRL 194 / M139) (Aspergillus nidulans).